Here is a 450-residue protein sequence, read N- to C-terminus: Methionine aminopeptidase 2 (450 aa).

The tract at residues 1-99 (MAVQAPEVDK…LFPNSQYPEG (99 aa)) is disordered. Acidic residues predominate over residues 33–49 (GDEDAENEESDEDDDQG). Basic residues predominate over residues 60 to 75 (KKKRKRKPKKKKKKGV). Position 200 (His200) interacts with substrate. The a divalent metal cation site is built by Asp220, Asp231, and His300. His308 provides a ligand contact to substrate. A divalent metal cation is bound by residues Glu336 and Glu431.

It belongs to the peptidase M24A family. Methionine aminopeptidase eukaryotic type 2 subfamily. The cofactor is Co(2+). Requires Zn(2+) as cofactor. Mn(2+) is required as a cofactor. Fe(2+) serves as cofactor.

It localises to the cytoplasm. The enzyme catalyses Release of N-terminal amino acids, preferentially methionine, from peptides and arylamides.. Its function is as follows. Cotranslationally removes the N-terminal methionine from nascent proteins. The N-terminal methionine is often cleaved when the second residue in the primary sequence is small and uncharged (Met-Ala-, Cys, Gly, Pro, Ser, Thr, or Val). This is Methionine aminopeptidase 2 from Uncinocarpus reesii (strain UAMH 1704).